The sequence spans 91 residues: Small ribosomal subunit protein bS16 (91 aa).

Belongs to the bacterial ribosomal protein bS16 family.

The sequence is that of Small ribosomal subunit protein bS16 from Phytoplasma australiense.